A 417-amino-acid polypeptide reads, in one-letter code: MLKREMNIADYDAELWQAMEQEKVRQEEHIELIASENYTSPRVMQAQGSQLTNKYAEGYPGKRYYGGCEYVDVVEQLAIDRAKELFGADYANVQPHSGSQANFAVYTALLQPGDTVLGMNLAQGGHLTHGSPVNFSGKLYNIIPYGIDESGKIDYDDMAKQAQEHKPKMIIGGFSAYSGIVDWAKMREIADSIGAYLFVDMAHVAGLIAAGVYPNPVPHAHVVTTTTHKTLAGPRGGLILAKGGSEELYKKLNSAVFPSAQGGPLMHVIAAKAVALKEAMEPEFKVYQQQVAKNAKAMVEVFLNRGYKVVSGGTENHLFLLDLVDKNLTGKEADAALGRANITVNKNSVPNDPKSPFVTSGIRIGSPAVTRRGFKEAEVKELAGWMCDVLDNINDEAVIERVKGKVLDICARFPVYA.

Residues leucine 121 and 125 to 127 (GHL) each bind (6S)-5,6,7,8-tetrahydrofolate. Lysine 229 carries the N6-(pyridoxal phosphate)lysine modification. Residue 355 to 357 (SPF) coordinates (6S)-5,6,7,8-tetrahydrofolate.

It belongs to the SHMT family. As to quaternary structure, homodimer. It depends on pyridoxal 5'-phosphate as a cofactor.

It is found in the cytoplasm. The catalysed reaction is (6R)-5,10-methylene-5,6,7,8-tetrahydrofolate + glycine + H2O = (6S)-5,6,7,8-tetrahydrofolate + L-serine. The protein operates within one-carbon metabolism; tetrahydrofolate interconversion. Its pathway is amino-acid biosynthesis; glycine biosynthesis; glycine from L-serine: step 1/1. In terms of biological role, catalyzes the reversible interconversion of serine and glycine with tetrahydrofolate (THF) serving as the one-carbon carrier. This reaction serves as the major source of one-carbon groups required for the biosynthesis of purines, thymidylate, methionine, and other important biomolecules. Also exhibits THF-independent aldolase activity toward beta-hydroxyamino acids, producing glycine and aldehydes, via a retro-aldol mechanism. The chain is Serine hydroxymethyltransferase from Klebsiella pneumoniae (strain 342).